A 70-amino-acid polypeptide reads, in one-letter code: MTTVKVKENEPFEIAMRRFKRSIEKTGLLTELRAREFYEKPTAVRKRKHAAAVKRTYKRLRSQMLPPKLY.

This sequence belongs to the bacterial ribosomal protein bS21 family.

This chain is Small ribosomal subunit protein bS21, found in Nitrosomonas eutropha (strain DSM 101675 / C91 / Nm57).